A 21-amino-acid chain; its full sequence is Hemocyanin subunit 6 (21 aa).

Belongs to the tyrosinase family. Hemocyanin subfamily. Hemolymph.

It is found in the secreted. It localises to the extracellular space. In terms of biological role, hemocyanins are copper-containing oxygen carriers occurring freely dissolved in the hemolymph of many mollusks and arthropods. In Maja squinado (Mediterranean spider crab), this protein is Hemocyanin subunit 6.